A 69-amino-acid chain; its full sequence is Large ribosomal subunit protein bL31 (69 aa).

Zn(2+) is bound by residues cysteine 17, cysteine 19, cysteine 37, and cysteine 40.

This sequence belongs to the bacterial ribosomal protein bL31 family. Type A subfamily. Part of the 50S ribosomal subunit. It depends on Zn(2+) as a cofactor.

Its function is as follows. Binds the 23S rRNA. The polypeptide is Large ribosomal subunit protein bL31 (Thermoanaerobacter pseudethanolicus (strain ATCC 33223 / 39E) (Clostridium thermohydrosulfuricum)).